Reading from the N-terminus, the 141-residue chain is Large ribosomal subunit protein uL11 (141 aa).

Belongs to the universal ribosomal protein uL11 family. In terms of assembly, part of the ribosomal stalk of the 50S ribosomal subunit. Interacts with L10 and the large rRNA to form the base of the stalk. L10 forms an elongated spine to which L12 dimers bind in a sequential fashion forming a multimeric L10(L12)X complex. In terms of processing, one or more lysine residues are methylated.

Its function is as follows. Forms part of the ribosomal stalk which helps the ribosome interact with GTP-bound translation factors. This is Large ribosomal subunit protein uL11 from Geobacillus kaustophilus (strain HTA426).